We begin with the raw amino-acid sequence, 393 residues long: Pyrin and HIN domain-containing protein 1-like (393 aa).

In terms of domain architecture, Pyrin spans 1–87 (MVNEYKRIVL…ANKLKNEKAK (87 aa)). The segment at 82–188 (KNEKAKAKRK…TPTRSSSRIL (107 aa)) is disordered. Positions 87-102 (KAKRKGKGKRKTAAKR) are enriched in basic residues. 2 stretches are compositionally biased toward polar residues: residues 108–118 (PSTSQPMSTTN) and 126–151 (GRSTPDTQVAQLSLPTASRRNQAIQI). A compositionally biased stretch (low complexity) spans 152-169 (SPTIASSSGQTSSRSSET). Residues 170–186 (LQSIIQSPETPTRSSSR) show a composition bias toward polar residues. The HIN-200 domain maps to 219–393 (NVPKEPSEEN…NPGDKLRLML (175 aa)).

It belongs to the HIN-200 family.

The protein localises to the nucleus. This chain is Pyrin and HIN domain-containing protein 1-like, found in Mus musculus (Mouse).